The chain runs to 930 residues: Protein translocase subunit SecA (930 aa).

ATP-binding positions include Gln-83, Gly-101–Thr-105, and Asp-491.

It belongs to the SecA family. In terms of assembly, monomer and homodimer. Part of the essential Sec protein translocation apparatus which comprises SecA, SecYEG and auxiliary proteins SecDF. Other proteins may also be involved.

The protein resides in the cell inner membrane. It is found in the cellular thylakoid membrane. It localises to the cytoplasm. The catalysed reaction is ATP + H2O + cellular proteinSide 1 = ADP + phosphate + cellular proteinSide 2.. Its function is as follows. Part of the Sec protein translocase complex. Interacts with the SecYEG preprotein conducting channel. Has a central role in coupling the hydrolysis of ATP to the transfer of proteins into and across the cell membrane, serving as an ATP-driven molecular motor driving the stepwise translocation of polypeptide chains across the membrane. Probably participates in protein translocation into and across both the cytoplasmic and thylakoid membranes in cyanobacterial cells. The polypeptide is Protein translocase subunit SecA (Nostoc sp. (strain PCC 7120 / SAG 25.82 / UTEX 2576)).